A 224-amino-acid polypeptide reads, in one-letter code: 7-cyano-7-deazaguanine synthase (224 aa).

Residue 12–22 (LSGGLDSSTVT) participates in ATP binding. The Zn(2+) site is built by C193, C201, C204, and C207.

Belongs to the QueC family. Zn(2+) serves as cofactor.

It carries out the reaction 7-carboxy-7-deazaguanine + NH4(+) + ATP = 7-cyano-7-deazaguanine + ADP + phosphate + H2O + H(+). The protein operates within purine metabolism; 7-cyano-7-deazaguanine biosynthesis. Catalyzes the ATP-dependent conversion of 7-carboxy-7-deazaguanine (CDG) to 7-cyano-7-deazaguanine (preQ(0)). In Prochlorococcus marinus (strain MIT 9515), this protein is 7-cyano-7-deazaguanine synthase.